A 397-amino-acid polypeptide reads, in one-letter code: Cysteine desulfurase IscS (397 aa).

Pyridoxal 5'-phosphate contacts are provided by residues 72–73, N152, Q180, and 200–202; these read GS and SAH. At K203 the chain carries N6-(pyridoxal phosphate)lysine. T238 lines the pyridoxal 5'-phosphate pocket. The active-site Cysteine persulfide intermediate is C328. Position 328 (C328) interacts with [2Fe-2S] cluster.

Belongs to the class-V pyridoxal-phosphate-dependent aminotransferase family. NifS/IscS subfamily. As to quaternary structure, homodimer. Forms a heterotetramer with IscU, interacts with other sulfur acceptors. Pyridoxal 5'-phosphate is required as a cofactor.

Its subcellular location is the cytoplasm. It catalyses the reaction (sulfur carrier)-H + L-cysteine = (sulfur carrier)-SH + L-alanine. The protein operates within cofactor biosynthesis; iron-sulfur cluster biosynthesis. Master enzyme that delivers sulfur to a number of partners involved in Fe-S cluster assembly, tRNA modification or cofactor biosynthesis. Catalyzes the removal of elemental sulfur atoms from cysteine to produce alanine. Functions as a sulfur delivery protein for Fe-S cluster synthesis onto IscU, an Fe-S scaffold assembly protein, as well as other S acceptor proteins. The polypeptide is Cysteine desulfurase IscS (Clostridium botulinum (strain Kyoto / Type A2)).